We begin with the raw amino-acid sequence, 257 residues long: Imidazole glycerol phosphate synthase subunit HisF (257 aa).

Active-site residues include D12 and D131.

It belongs to the HisA/HisF family. As to quaternary structure, heterodimer of HisH and HisF.

It is found in the cytoplasm. It carries out the reaction 5-[(5-phospho-1-deoxy-D-ribulos-1-ylimino)methylamino]-1-(5-phospho-beta-D-ribosyl)imidazole-4-carboxamide + L-glutamine = D-erythro-1-(imidazol-4-yl)glycerol 3-phosphate + 5-amino-1-(5-phospho-beta-D-ribosyl)imidazole-4-carboxamide + L-glutamate + H(+). Its pathway is amino-acid biosynthesis; L-histidine biosynthesis; L-histidine from 5-phospho-alpha-D-ribose 1-diphosphate: step 5/9. Functionally, IGPS catalyzes the conversion of PRFAR and glutamine to IGP, AICAR and glutamate. The HisF subunit catalyzes the cyclization activity that produces IGP and AICAR from PRFAR using the ammonia provided by the HisH subunit. The sequence is that of Imidazole glycerol phosphate synthase subunit HisF from Rhodococcus jostii (strain RHA1).